The following is a 217-amino-acid chain: Germin-like protein subfamily 1 member 1 (217 aa).

The N-terminal stretch at 1–18 (MILNILLTLTLLMGRVKS) is a signal peptide. An intrachain disulfide couples Cys27 to Cys45. One can recognise a Cupin type-1 domain in the interval 59–209 (SALSRPGNTK…AYDINGQDVA (151 aa)). N-linked (GlcNAc...) asparagine glycosylation occurs at Asn75. Residues His108, His110, Glu115, and His154 each contribute to the Mn(2+) site.

The protein belongs to the germin family. Oligomer (believed to be a pentamer but probably hexamer).

It is found in the secreted. The protein localises to the extracellular space. Its subcellular location is the apoplast. May play a role in plant defense. Probably has no oxalate oxidase activity even if the active site is conserved. This chain is Germin-like protein subfamily 1 member 1 (GLP7), found in Arabidopsis thaliana (Mouse-ear cress).